The sequence spans 530 residues: Cytochrome P450 2U1 (530 aa).

A run of 4 helical transmembrane segments spans residues 21-41 (VRATGGALLLCLLAVLLGWVW), 99-119 (VYGNIFSFFIGHRLVVVLSDF), 247-267 (ICLHSQLFLINICPWFYYLPF), and 328-348 (LFYIIGDLFIAGTDTTTNSLL). A heme-binding site is contributed by cysteine 476. The helical transmembrane segment at 481-501 (LAKMELFLMFVSLMQTFTFAL) threads the bilayer.

This sequence belongs to the cytochrome P450 family. Heme serves as cofactor. In terms of tissue distribution, widely expressed. Expressed in heart, brain and liver.

The protein resides in the endoplasmic reticulum membrane. The protein localises to the microsome membrane. It localises to the mitochondrion inner membrane. It catalyses the reaction an omega-methyl-long-chain fatty acid + reduced [NADPH--hemoprotein reductase] + O2 = an omega-hydroxy-long-chain fatty acid + oxidized [NADPH--hemoprotein reductase] + H2O + H(+). It carries out the reaction (5Z,8Z,11Z,14Z)-eicosatetraenoate + reduced [NADPH--hemoprotein reductase] + O2 = 19-hydroxy-(5Z,8Z,11Z,14Z)-eicosatetraenoate + oxidized [NADPH--hemoprotein reductase] + H2O + H(+). The catalysed reaction is (5Z,8Z,11Z,14Z)-eicosatetraenoate + reduced [NADPH--hemoprotein reductase] + O2 = 20-hydroxy-(5Z,8Z,11Z,14Z)-eicosatetraenoate + oxidized [NADPH--hemoprotein reductase] + H2O + H(+). The enzyme catalyses N-[(5Z,8Z,11Z,14Z)-eicosatetraenoyl]-serotonin + reduced [NADPH--hemoprotein reductase] + O2 = 2-oxo-N-[(5Z,8Z,11Z,14Z)-eicosatetraenoyl]-serotonin + oxidized [NADPH--hemoprotein reductase] + H2O + H(+). A cytochrome P450 monooxygenase involved in the metabolism of arachidonic acid and its conjugates. Mechanistically, uses molecular oxygen inserting one oxygen atom into a substrate, and reducing the second into a water molecule, with two electrons provided by NADPH via cytochrome P450 reductase (CPR; NADPH-ferrihemoprotein reductase). Acts as an omega and omega-1 hydroxylase for arachidonic acid and possibly for other long chain fatty acids. May modulate the arachidonic acid signaling pathway and play a role in other fatty acid signaling processes. May down-regulate the biological activities of N-arachidonoyl-serotonin, an endocannabinoid that has anti-nociceptive effects through inhibition of fatty acid amide hydrolase FAAH, TRPV1 receptor and T-type calcium channels. Catalyzes C-2 oxidation of the indole ring of N-arachidonoyl-serotonin forming a less active product 2-oxo-N-arachidonoyl-serotonin. The chain is Cytochrome P450 2U1 from Mus musculus (Mouse).